The following is a 203-amino-acid chain: LexA repressor (203 aa).

The H-T-H motif DNA-binding region spans 29–49 (VREIGQEVGLSSSSTVHGYLK). Active-site for autocatalytic cleavage activity residues include serine 126 and lysine 163.

This sequence belongs to the peptidase S24 family. As to quaternary structure, homodimer.

It carries out the reaction Hydrolysis of Ala-|-Gly bond in repressor LexA.. In terms of biological role, represses a number of genes involved in the response to DNA damage (SOS response), including recA and lexA. In the presence of single-stranded DNA, RecA interacts with LexA causing an autocatalytic cleavage which disrupts the DNA-binding part of LexA, leading to derepression of the SOS regulon and eventually DNA repair. This chain is LexA repressor, found in Pelotomaculum thermopropionicum (strain DSM 13744 / JCM 10971 / SI).